The chain runs to 414 residues: Protein SOSEKI 2 (414 aa).

The interval 44–135 (RRVQVVYYLT…YVLKGSEITD (92 aa)) is DIX-like oligomerization domain. A disordered region spans residues 171 to 273 (SFDDAELYVG…GDPVEPGSGR (103 aa)). Over residues 173–192 (DDAELYVGEEEEEEDGEYEL) the composition is skewed to acidic residues. Polar residues predominate over residues 205 to 229 (PQSRCSRGVSTETMESTEQKPNLTK). The segment covering 230–242 (TEQDLQVRSDSSD) has biased composition (basic and acidic residues). Positions 283–284 (CG) match the Association to cell membranes motif.

Belongs to the SOSEKI family. Homodimer. Forms long polymer filaments with other SOKs proteins polymers (e.g. SOK1, SOK2, SOK3 and SOK4) crucial for polar localization and biological activity. Binds to ANGUSTIFOLIA (AN). As to expression, expressed during embryogenesis and in roots.

Its subcellular location is the cell membrane. Its function is as follows. Part of a three-gene cluster containing FLC, UFC and DFC, which is coordinately regulated in response to vernalization. Also regulated by FLX. SOSEKI proteins (SOK1-5) locally interpret global polarity cues and can influence cell division orientation to coordinate cell polarization relative to body axes, probably by guiding ANGUSTIFOLIA (AN) polarized localization. The chain is Protein SOSEKI 2 from Arabidopsis thaliana (Mouse-ear cress).